A 172-amino-acid chain; its full sequence is Translation initiation factor IF-3 (172 aa).

It belongs to the IF-3 family. In terms of assembly, monomer.

The protein resides in the cytoplasm. Functionally, IF-3 binds to the 30S ribosomal subunit and shifts the equilibrium between 70S ribosomes and their 50S and 30S subunits in favor of the free subunits, thus enhancing the availability of 30S subunits on which protein synthesis initiation begins. This chain is Translation initiation factor IF-3, found in Geobacter sulfurreducens (strain ATCC 51573 / DSM 12127 / PCA).